The chain runs to 305 residues: Tyrosine recombinase XerC (305 aa).

Residues 4 to 95 form the Core-binding (CB) domain; the sequence is TSIQELIDKW…AVKNFYRFLE (92 aa). In terms of domain architecture, Tyr recombinase spans 116 to 298; it reads LLPKALSEDD…SIKHLEAVYT (183 aa). Residues R159, K182, H250, R253, and H276 contribute to the active site. Y285 acts as the O-(3'-phospho-DNA)-tyrosine intermediate in catalysis.

The protein belongs to the 'phage' integrase family. XerC subfamily. As to quaternary structure, forms a cyclic heterotetrameric complex composed of two molecules of XerC and two molecules of XerD.

The protein resides in the cytoplasm. In terms of biological role, site-specific tyrosine recombinase, which acts by catalyzing the cutting and rejoining of the recombining DNA molecules. The XerC-XerD complex is essential to convert dimers of the bacterial chromosome into monomers to permit their segregation at cell division. It also contributes to the segregational stability of plasmids. This is Tyrosine recombinase XerC from Rickettsia felis (strain ATCC VR-1525 / URRWXCal2) (Rickettsia azadi).